Here is a 903-residue protein sequence, read N- to C-terminus: Protein translocase subunit SecA (903 aa).

Residues Gln-87, 105–109, and Asp-512 contribute to the ATP site; that span reads GEGKT. The interval 853–903 is disordered; it reads KQQQLSHYEENALVTEDPNAPATAERKVGRNDPCPCGSGKKYKQCHGRLQS. The Zn(2+) site is built by Cys-886, Cys-888, Cys-897, and His-898. Over residues 892–903 the composition is skewed to basic residues; it reads KKYKQCHGRLQS.

It belongs to the SecA family. As to quaternary structure, monomer and homodimer. Part of the essential Sec protein translocation apparatus which comprises SecA, SecYEG and auxiliary proteins SecDF-YajC and YidC. Zn(2+) is required as a cofactor.

It is found in the cell inner membrane. The protein localises to the cytoplasm. It carries out the reaction ATP + H2O + cellular proteinSide 1 = ADP + phosphate + cellular proteinSide 2.. Part of the Sec protein translocase complex. Interacts with the SecYEG preprotein conducting channel. Has a central role in coupling the hydrolysis of ATP to the transfer of proteins into and across the cell membrane, serving both as a receptor for the preprotein-SecB complex and as an ATP-driven molecular motor driving the stepwise translocation of polypeptide chains across the membrane. This is Protein translocase subunit SecA from Serratia proteamaculans (strain 568).